The following is a 126-amino-acid chain: Probable glycine cleavage system H protein (126 aa).

Residues 24–106 (VVRVGITDFA…FGDGWLLEVE (83 aa)) enclose the Lipoyl-binding domain. K65 bears the N6-lipoyllysine mark.

Belongs to the GcvH family. The glycine cleavage system is composed of four proteins: P, T, L and H. (R)-lipoate is required as a cofactor.

Its function is as follows. The glycine cleavage system catalyzes the degradation of glycine. The H protein shuttles the methylamine group of glycine from the P protein to the T protein. This is Probable glycine cleavage system H protein from Natronomonas pharaonis (strain ATCC 35678 / DSM 2160 / CIP 103997 / JCM 8858 / NBRC 14720 / NCIMB 2260 / Gabara) (Halobacterium pharaonis).